The sequence spans 346 residues: Putative [LysW]-L-2-aminoadipate/[LysW]-L-glutamate phosphate reductase (346 aa).

An NADP(+)-binding site is contributed by 12–15 (SGFT). Residue Cys-147 is part of the active site. The interval 178-198 (GSSEGGAGGGDASSHPERSGV) is disordered. Position 310 (Asn-310) interacts with NADP(+).

Belongs to the NAGSA dehydrogenase family. Type 1 subfamily. LysY sub-subfamily.

The protein resides in the cytoplasm. The catalysed reaction is [amino-group carrier protein]-C-terminal-N-(1-carboxy-5-oxopentan-1-yl)-L-glutamine + phosphate + NADP(+) = [amino-group carrier protein]-C-terminal-N-(1-carboxy-5-phosphooxy-5-oxopentan-1-yl)-L-glutamine + NADPH + H(+). The enzyme catalyses [amino-group carrier protein]-C-terminal-gamma-(L-glutamyl-5-semialdehyde)-L-glutamate + phosphate + NADP(+) = [amino-group carrier protein]-C-terminal-gamma-(5-phospho-L-glutamyl)-L-glutamate + NADPH + H(+). The protein operates within amino-acid biosynthesis; L-lysine biosynthesis via AAA pathway; L-lysine from L-alpha-aminoadipate (Thermus route): step 3/5. Its pathway is amino-acid biosynthesis; L-arginine biosynthesis. Involved in both the arginine and lysine biosynthetic pathways. This chain is Putative [LysW]-L-2-aminoadipate/[LysW]-L-glutamate phosphate reductase, found in Haloquadratum walsbyi (strain DSM 16790 / HBSQ001).